The following is a 106-amino-acid chain: Gibberellin-regulated protein 4 (106 aa).

The signal sequence occupies residues 1–25; that stretch reads MAKSYGAIFLLTLIVLFMLQTMVMA.

The protein belongs to the GASA family. Post-translationally, six disulfide bonds may be present. In terms of tissue distribution, expressed in flower buds, style, stamen filaments, vasculature of petals, root phloem, vasculature of cotyledons and rosette leaves and developing embryo.

It is found in the secreted. Functionally, gibberellin-regulated protein involved in the regulation of floral meristem and floral organ identity, and promotion of seed size and weight. May play a role in the promotion of gibberellin responses such as regulation of flowering under short-day conditions, seed germination and inhibition of gibberellin oxidase. Possesses redox activity in E.coli and may function in redox regulation in planta. In Arabidopsis thaliana (Mouse-ear cress), this protein is Gibberellin-regulated protein 4 (GASA4).